The primary structure comprises 196 residues: Flagellar transcriptional regulator FlhC (196 aa).

Residues Cys-138, Cys-141, Cys-158, and Cys-161 each coordinate Zn(2+).

Belongs to the FlhC family. In terms of assembly, heterohexamer composed of two FlhC and four FlhD subunits. Each FlhC binds a FlhD dimer, forming a heterotrimer, and a hexamer assembles by dimerization of two heterotrimers. It depends on Zn(2+) as a cofactor.

The protein resides in the cytoplasm. In terms of biological role, functions in complex with FlhD as a master transcriptional regulator that regulates transcription of several flagellar and non-flagellar operons by binding to their promoter region. Activates expression of class 2 flagellar genes, including fliA, which is a flagellum-specific sigma factor that turns on the class 3 genes. Also regulates genes whose products function in a variety of physiological pathways. The chain is Flagellar transcriptional regulator FlhC from Sodalis glossinidius (strain morsitans).